Consider the following 556-residue polypeptide: Serine beta-lactamase-like protein LACTB, mitochondrial (556 aa).

The N-terminal 117 residues, 1–117 (MYRLLSAVMA…RAIDSSRDLL (117 aa)), are a transit peptide targeting the mitochondrion. The Acyl-ester intermediate role is filled by serine 166. Residues 249–282 (ESDQEKELKEKGGKSNEKNDFAKAKVEQDNETKG) show a composition bias toward basic and acidic residues. Positions 249–290 (ESDQEKELKEKGGKSNEKNDFAKAKVEQDNETKGRNSKPCKK) are disordered. 2 positions are modified to N6-succinyllysine: lysine 290 and lysine 291. N6-acetyllysine is present on residues lysine 304 and lysine 349.

It belongs to the peptidase S12 family.

It is found in the mitochondrion. Functionally, mitochondrial serine protease that acts as a regulator of mitochondrial lipid metabolism. Acts by decreasing protein levels of PISD, a mitochondrial enzyme that converts phosphatidylserine (PtdSer) to phosphatidylethanolamine (PtdEtn), thereby affecting mitochondrial lipid metabolism. It is unclear whether it acts directly by mediating proteolysis of PISD or by mediating proteolysis of another lipid metabolism protein. This chain is Serine beta-lactamase-like protein LACTB, mitochondrial, found in Bos taurus (Bovine).